A 70-amino-acid polypeptide reads, in one-letter code: NADH dehydrogenase [ubiquinone] 1 alpha subcomplex subunit 1 (70 aa).

The chain crosses the membrane as a helical span at residues 1 to 21 (MWFEILPGLSVMGVCLLIPGL).

This sequence belongs to the complex I NDUFA1 subunit family. In terms of assembly, complex I is composed of 45 different subunits. Primarily expressed in heart and skeletal muscle.

It is found in the mitochondrion inner membrane. Its function is as follows. Accessory subunit of the mitochondrial membrane respiratory chain NADH dehydrogenase (Complex I), that is believed not to be involved in catalysis. Complex I functions in the transfer of electrons from NADH to the respiratory chain. The immediate electron acceptor for the enzyme is believed to be ubiquinone. The sequence is that of NADH dehydrogenase [ubiquinone] 1 alpha subcomplex subunit 1 (NDUFA1) from Homo sapiens (Human).